Consider the following 1037-residue polypeptide: Exportin-T (1037 aa).

This sequence belongs to the exportin family.

It localises to the nucleus. The protein resides in the cytoplasm. Its function is as follows. tRNA nucleus export receptor which facilitates tRNA translocation across the nuclear pore complex. Involved in pre-tRNA splicing, probably by affecting the interaction of pre-tRNA with splicing endonuclease. This is Exportin-T (los1) from Neosartorya fischeri (strain ATCC 1020 / DSM 3700 / CBS 544.65 / FGSC A1164 / JCM 1740 / NRRL 181 / WB 181) (Aspergillus fischerianus).